The primary structure comprises 195 residues: Small ribosomal subunit protein uS5 (195 aa).

The segment at 1 to 20 (MAREREGGGRGRREDREERD) is disordered. The S5 DRBM domain occupies 23–86 (FVDKLVHINR…EAAKRGLIRV (64 aa)). A disordered region spans residues 161–195 (DSPRSVAARRGIKVSTLQSRRRDADPADQSEAAVA).

It belongs to the universal ribosomal protein uS5 family. Part of the 30S ribosomal subunit. Contacts proteins S4 and S8.

Its function is as follows. With S4 and S12 plays an important role in translational accuracy. Located at the back of the 30S subunit body where it stabilizes the conformation of the head with respect to the body. This chain is Small ribosomal subunit protein uS5, found in Methylobacterium radiotolerans (strain ATCC 27329 / DSM 1819 / JCM 2831 / NBRC 15690 / NCIMB 10815 / 0-1).